The chain runs to 242 residues: UPF0073 membrane protein Rv1085c (242 aa).

Helical transmembrane passes span 42–62 (VYSA…SWAV), 67–87 (AGLT…VSAT), 108–128 (SMIF…ALPA), 133–153 (VVLS…MCWP), 159–179 (VGVP…ATIL), 186–206 (ALVL…LYAV), and 222–242 (FHAC…FVVF).

This sequence belongs to the UPF0073 (Hly-III) family.

It is found in the cell membrane. This Mycobacterium tuberculosis (strain ATCC 25618 / H37Rv) protein is UPF0073 membrane protein Rv1085c.